The primary structure comprises 104 residues: Cytochrome c-552 (104 aa).

Residues 1–23 (MHLHLRGICLVLAVASSSSSALA) form the signal peptide. Heme c contacts are provided by C37, C40, H41, and M82.

It belongs to the cytochrome c family. In terms of assembly, monoheme monomer. Has the tendency to dimerize. In terms of processing, binds 1 heme c group covalently per subunit.

Its subcellular location is the periplasm. This chain is Cytochrome c-552 (cycB), found in Bradyrhizobium diazoefficiens (strain JCM 10833 / BCRC 13528 / IAM 13628 / NBRC 14792 / USDA 110).